A 309-amino-acid polypeptide reads, in one-letter code: MEAVLSALPWVPVNISGSDLLAKAWFGDSQYRVLLTDLSTVWEEEMSTDDIQSRAQDLNKRLRAPAQAFFSHLCSVARPCFSGLDEDQISAAQAALEQHGESLTVKLKSELAGLPFYWEFRCTTTPVAVVCRQLVRPLLAMTLVLQRQAEDLAALLARKDAEIQDYQENGAVLSRARLQTEPFEVHQYKENFITQILPQMNVTLDSLGFDSELQALYMAVNSGKTGRKRKHSPDSSPAAQENHITDHQHISESTDVGPSLASQEHNNAKESGRSQVANSQQTLPLSSTAGSEDRSTSRAKKKKAVGLFR.

A globular head region spans residues 1–134 (MEAVLSALPW…TPVAVVCRQL (134 aa)). The C-terminal tail stretch occupies residues 223 to 298 (GKTGRKRKHS…AGSEDRSTSR (76 aa)). The segment at 223–309 (GKTGRKRKHS…KKKKAVGLFR (87 aa)) is disordered. The span at 243 to 252 (HITDHQHISE) shows a compositional bias: basic and acidic residues. 2 stretches are compositionally biased toward polar residues: residues 253–265 (STDV…SQEH) and 273–290 (RSQV…STAG). Residues 297–309 (SRAKKKKAVGLFR) show a composition bias toward basic residues. The XLM signature appears at 299-309 (AKKKKAVGLFR).

This sequence belongs to the XRCC4-XLF family. XLF subfamily. As to quaternary structure, homodimer. Interacts with xrcc4; the interaction is direct and is mediated via a head-to-head interaction between N-terminal head regions. Component of the core long-range non-homologous end joining (NHEJ) complex (also named DNA-PK complex) composed of prkdc/DNA-PKcs, lig4, xrcc4, xrcc6/Ku70, xrcc5/Ku80 and nhej1/xlf.

The protein localises to the nucleus. It is found in the chromosome. Its function is as follows. DNA repair protein involved in DNA non-homologous end joining (NHEJ); it is required for double-strand break (DSB) repair and V(D)J recombination and is also involved in telomere maintenance. Plays a key role in NHEJ by promoting the ligation of various mismatched and non-cohesive ends. In some studies, has been shown to associate with xrcc4 to form alternating helical filaments that bridge DNA and act like a bandage, holding together the broken DNA until it is repaired. Alternatively, it has also been shown that rather than forming filaments, a single nhej1 dimer interacts through both head domains with xrcc4 to promote the close alignment of DNA ends. The xrcc4-nhej1/xlf subcomplex binds to the DNA fragments of a DSB in a highly diffusive manner and robustly bridges two independent DNA molecules, holding the broken DNA fragments in close proximity to one other. The mobility of the bridges ensures that the ends remain accessible for further processing by other repair factors. The sequence is that of Non-homologous end-joining factor 1 (nhej1) from Danio rerio (Zebrafish).